Here is a 63-residue protein sequence, read N- to C-terminus: Large ribosomal subunit protein uL30 (63 aa).

It belongs to the universal ribosomal protein uL30 family. As to quaternary structure, part of the 50S ribosomal subunit.

This Natranaerobius thermophilus (strain ATCC BAA-1301 / DSM 18059 / JW/NM-WN-LF) protein is Large ribosomal subunit protein uL30.